The sequence spans 65 residues: uncharacterized protein (65 aa).

This is an uncharacterized protein from Saccharolobus islandicus (Sulfolobus islandicus).